We begin with the raw amino-acid sequence, 139 residues long: uncharacterized protein (139 aa).

Residues 54-75 (NSLHRHGDQAWGKHRRQNSLKS) are disordered.

This is an uncharacterized protein from Homo sapiens (Human).